A 409-amino-acid polypeptide reads, in one-letter code: Glycosyltransferase GtfC (409 aa).

The protein belongs to the glycosyltransferase 28 family.

It carries out the reaction dTDP-beta-L-vancosamine + devancoaminyl-vancomycin = epivancomycin + dTDP + H(+). It catalyses the reaction chloroorienticin B + dTDP-beta-L-vancosamine = chloroeremomycin + dTDP + H(+). The protein operates within antibiotic biosynthesis; vancomycin biosynthesis. Its function is as follows. Catalyzes the attachment of dTDP-L-4-epi-vancosamine to chloroorienticin B to form chloroeremomycin in the biosynthesis of glycopeptide antibiotic chloroeremomycin, a member of the vancomycin group of antibiotics. Also able to use dTDP-L-4-epi-vancosamine and devancoaminyl-vancomycin (DVV) to create epivancomycin. Acts downstream of GtfA. The chain is Glycosyltransferase GtfC (gtfC) from Amycolatopsis orientalis (Nocardia orientalis).